A 280-amino-acid chain; its full sequence is Ribosomal RNA small subunit methyltransferase A (280 aa).

Positions 13, 15, 40, 61, 85, and 106 each coordinate S-adenosyl-L-methionine. Positions 258-280 are disordered; the sequence is RPPADVEDANAPHTEQGKGDNSQ.

It belongs to the class I-like SAM-binding methyltransferase superfamily. rRNA adenine N(6)-methyltransferase family. RsmA subfamily.

The protein resides in the cytoplasm. It catalyses the reaction adenosine(1518)/adenosine(1519) in 16S rRNA + 4 S-adenosyl-L-methionine = N(6)-dimethyladenosine(1518)/N(6)-dimethyladenosine(1519) in 16S rRNA + 4 S-adenosyl-L-homocysteine + 4 H(+). In terms of biological role, specifically dimethylates two adjacent adenosines (A1518 and A1519) in the loop of a conserved hairpin near the 3'-end of 16S rRNA in the 30S particle. May play a critical role in biogenesis of 30S subunits. The chain is Ribosomal RNA small subunit methyltransferase A from Alcanivorax borkumensis (strain ATCC 700651 / DSM 11573 / NCIMB 13689 / SK2).